The chain runs to 1050 residues: Ankyrin repeat domain-containing protein 27 (1050 aa).

Positions 1 to 372 (MALYDEDLLK…RQGSLSAKPP (372 aa)) are sufficient for GEF activity towards RAB21. The 139-residue stretch at 233–371 (ASEDAAFNKI…IRQGSLSAKP (139 aa)) folds into the VPS9 domain. ANK repeat units follow at residues 396–426 (SPTD…DKDA), 462–491 (RGHT…VVNA), 495–524 (HGAT…SAEV), 528–560 (NGNT…RLDI), 564–593 (KGDT…SPEI), and 597–627 (LKET…RQKS). The tract at residues 396–460 (SPTDCLFKHI…PSVVTPFSRD (65 aa)) is sufficient for interaction with VPS29. An interaction with RAB38 region spans residues 451–600 (PSVVTPFSRD…PEIQNRLKET (150 aa)). Residues 451 to 730 (PSVVTPFSRD…APAQKRLAKV (280 aa)) form an interaction with RAB32 region. Residues 630–665 (APVQSLQRSVDSISQESSTSSFSSMSAGSRQEETKK) form a disordered region. The segment covering 638-658 (SVDSISQESSTSSFSSMSAGS) has biased composition (low complexity). The tract at residues 658–707 (SRQEETKKDYREVEKLLRAVADGDLEMVRYLLEWTEEDLEDAEDTVSAVD) is required for interaction with VAMP7. 5 ANK repeats span residues 668-698 (REVE…DLED), 743-772 (DGSS…NAGA), 776-805 (DQAV…KPNK), 809-838 (SGNT…AINT), and 842-871 (KGNT…SVQV). The segment at 692–746 (TEEDLEDAEDTVSAVDPEFCHPLCQCPKCAPAQKRLAKVPASGLGVNVTSQDGSS) is sufficient for interaction with VPS29. Residues Ser962 and Ser970 each carry the phosphoserine modification. A disordered region spans residues 987–1050 (PAQSGSHAAE…TPQEVSASRS (64 aa)). A compositionally biased stretch (basic and acidic residues) spans 994 to 1007 (AAEKGNSDWPERPR). Thr1023 carries the phosphothreonine modification. Residues 1040–1050 (STPQEVSASRS) show a composition bias toward polar residues.

Interacts with RAB21 (GDP-bound form), VPS29, KIF5A, KIF5C, GOLGA4. Interacts with RAB32 (GTP-bound form), RAB38 (GTP-bound form), VAMP7. Interacts with low affinity with RAB5. ANKRD27:RAB32 heterodimers can homodimerize to form tetramers. Can interact with RAB38 or RAB32, VPS29 and VAMP7 simultaneously. A decreased interaction with RAB32 seen in the presence of SGSM2.

It is found in the early endosome. The protein localises to the late endosome. Its subcellular location is the cytoplasmic vesicle membrane. It localises to the lysosome. The protein resides in the cell membrane. It is found in the melanosome. May be a guanine exchange factor (GEF) for Rab21, Rab32 and Rab38 and regulate endosome dynamics. May regulate the participation of VAMP7 in membrane fusion events; in vitro inhibits VAMP7-mediated SNARE complex formation by trapping VAMP7 in a closed, fusogenically inactive conformation. Involved in peripheral melanosomal distribution of TYRP1 in melanocytes; the function, which probably is implicating vesicle-trafficking, includes cooperation with Rab32, Rab38 and VAMP7. Involved in the regulation of neurite growth; the function seems to require its GEF activity, probably towards Rab21, and VAMP7 but not Rab32/38. Proposed to be involved in Golgi sorting of VAMP7 and transport of VAMP7 vesicles to the cell surface; the function seems to implicate kinesin heavy chain isoform 5 proteins, GOLGA4, RAB21 and MACF1. Required for the colocalization of VAMP7 and Rab21, probably on TGN sites. Involved in GLUT1 endosome-to-plasma membrane trafficking; the function is dependent of association with VPS29. Regulates the proper trafficking of melanogenic enzymes TYR, TYRP1 and DCT/TYRP2 to melanosomes in melanocytes. The chain is Ankyrin repeat domain-containing protein 27 (ANKRD27) from Pongo abelii (Sumatran orangutan).